A 334-amino-acid chain; its full sequence is NAC domain-containing protein 66 (334 aa).

The NAC domain maps to 11–175; the sequence is VPPGFRFHPT…GWVVCRVFKK (165 aa). The DNA-binding element occupies 111-181; the sequence is IGMRKTLVFY…VFKKNNLCKN (71 aa).

As to expression, mostly expressed in anthers. Also present in pollen, base of siliques and inflorescence stems.

Its subcellular location is the nucleus. In terms of biological role, transcription activator of genes involved in biosynthesis of secondary walls. Together with NST1, required for the secondary cell wall thickening of the anther endocethium, which is necessary for anther dehiscence. May also regulate the secondary cell wall lignification of other tissues such as tracheary elements. This chain is NAC domain-containing protein 66 (NAC066), found in Arabidopsis thaliana (Mouse-ear cress).